Here is a 447-residue protein sequence, read N- to C-terminus: Tubulin beta chain (447 aa).

Residues glutamine 11, glutamate 69, serine 138, glycine 142, threonine 143, glycine 144, asparagine 204, and asparagine 226 each contribute to the GTP site. Glutamate 69 is a binding site for Mg(2+). Residues 424–447 are disordered; sequence QYQEASVSEGEEEYDEEAPLEAEE. Residues 432 to 447 show a composition bias toward acidic residues; it reads EGEEEYDEEAPLEAEE.

This sequence belongs to the tubulin family. Dimer of alpha and beta chains. A typical microtubule is a hollow water-filled tube with an outer diameter of 25 nm and an inner diameter of 15 nM. Alpha-beta heterodimers associate head-to-tail to form protofilaments running lengthwise along the microtubule wall with the beta-tubulin subunit facing the microtubule plus end conferring a structural polarity. Microtubules usually have 13 protofilaments but different protofilament numbers can be found in some organisms and specialized cells. It depends on Mg(2+) as a cofactor.

Its subcellular location is the cytoplasm. It is found in the cytoskeleton. Its function is as follows. Tubulin is the major constituent of microtubules, a cylinder consisting of laterally associated linear protofilaments composed of alpha- and beta-tubulin heterodimers. Microtubules grow by the addition of GTP-tubulin dimers to the microtubule end, where a stabilizing cap forms. Below the cap, tubulin dimers are in GDP-bound state, owing to GTPase activity of alpha-tubulin. In Cochliobolus heterostrophus (Southern corn leaf blight fungus), this protein is Tubulin beta chain (TUB1).